We begin with the raw amino-acid sequence, 303 residues long: Protoporphyrin uptake protein 1 (303 aa).

Residues 1 to 18 (MSTTDSGFVLYHYTPSKA) are Extracellular-facing. Residues 19-39 (AAIVFVVLFIIMTVIFAVQTL) traverse the membrane as a helical segment. The Cytoplasmic segment spans residues 40–76 (YAARKSSKALKNNPFESSDDKVDSLEDAEYKQLKITP). Residues 77-97 (TVFAFIPFFTGCIMEAVGYIG) form a helical membrane-spanning segment. Residues 98–111 (RALSSSNPERTTPY) lie on the Extracellular side of the membrane. A helical transmembrane segment spans residues 112–132 (IIQSVLLLVAPALIAATIYMI). Residues 133–154 (FGRLLHVMRCQSLILISARFGT) lie on the Cytoplasmic side of the membrane. Residues 155–175 (TFFVVGDVFSFFLQAAGGGLM) form a helical membrane-spanning segment. Residues 176–183 (SKAGSTKT) lie on the Extracellular side of the membrane. The chain crosses the membrane as a helical span at residues 184 to 204 (GSGLITAGLFVQVIFFGFFII). At 205–226 (NEIRFTVNVKRRCLFYEDISRK) the chain is on the cytoplasmic side. The helical transmembrane segment at 227-247 (WIFVNATLLLSSMLILLRSIV) threads the bilayer. Over 248-264 (RIVEFIQGFNGYIISHE) the chain is Extracellular. Residues 265-285 (YFIYVFDAVPMLLVIIAFSVG) traverse the membrane as a helical segment. The Cytoplasmic segment spans residues 286–303 (SFFGNVFDVIKECQTLSN).

The protein belongs to the lipid-translocating exporter (LTE) (TC 9.A.26.1) family. In terms of processing, N-glycosylated.

It localises to the cell membrane. Its function is as follows. Involved in inducible protoporphyrin IX influx and heme efflux. In Saccharomyces cerevisiae (strain ATCC 204508 / S288c) (Baker's yeast), this protein is Protoporphyrin uptake protein 1 (PUG1).